Here is a 574-residue protein sequence, read N- to C-terminus: Adenine deaminase (574 aa).

This sequence belongs to the metallo-dependent hydrolases superfamily. Adenine deaminase family. It depends on Mn(2+) as a cofactor.

It catalyses the reaction adenine + H2O + H(+) = hypoxanthine + NH4(+). The sequence is that of Adenine deaminase from Thermosipho melanesiensis (strain DSM 12029 / CIP 104789 / BI429).